Here is a 31-residue protein sequence, read N- to C-terminus: Cytochrome b6-f complex subunit 6 (31 aa).

The helical transmembrane segment at 4 to 26 (ITSYFGFLLTALTITSALFIGLS) threads the bilayer.

This sequence belongs to the PetL family. In terms of assembly, the 4 large subunits of the cytochrome b6-f complex are cytochrome b6, subunit IV (17 kDa polypeptide, PetD), cytochrome f and the Rieske protein, while the 4 small subunits are PetG, PetL, PetM and PetN. The complex functions as a dimer.

It localises to the plastid. Its subcellular location is the chloroplast thylakoid membrane. Functionally, component of the cytochrome b6-f complex, which mediates electron transfer between photosystem II (PSII) and photosystem I (PSI), cyclic electron flow around PSI, and state transitions. PetL is important for photoautotrophic growth as well as for electron transfer efficiency and stability of the cytochrome b6-f complex. In Lactuca sativa (Garden lettuce), this protein is Cytochrome b6-f complex subunit 6.